The following is a 291-amino-acid chain: Segregation and condensation protein B (291 aa).

The protein belongs to the ScpB family. Homodimer. Homodimerization may be required to stabilize the binding of ScpA to the Smc head domains. Component of a cohesin-like complex composed of ScpA, ScpB and the Smc homodimer, in which ScpA and ScpB bind to the head domain of Smc. The presence of the three proteins is required for the association of the complex with DNA.

It is found in the cytoplasm. Its function is as follows. Participates in chromosomal partition during cell division. May act via the formation of a condensin-like complex containing Smc and ScpA that pull DNA away from mid-cell into both cell halves. This is Segregation and condensation protein B from Mycoplasmoides gallisepticum (strain R(low / passage 15 / clone 2)) (Mycoplasma gallisepticum).